The chain runs to 272 residues: Cell wall synthesis protein Wag31 (272 aa).

Disordered regions lie at residues 1–22 (MPLT…GKRG) and 62–109 (AARS…SEDT). Residues 30–67 (AFLDLVENELTRLIEENADLRQRVAELDQELAAARSGA) are a coiled coil. Composition is skewed to low complexity over residues 62 to 76 (AARS…ATSS) and 94 to 105 (VYEAPAQPAAPQ). T74 carries the phosphothreonine modification. A coiled-coil region spans residues 139-206 (LSDARAQAEA…AERKHSEIMG (68 aa)). The tract at residues 243-272 (ELGQRGSAAPVDSSANSDASGFGQFNRGNN) is disordered.

This sequence belongs to the DivIVA family. As to quaternary structure, forms homooligomers. Interacts with PbpB and CwsA. Phosphorylated by PknA.

It localises to the cytoplasm. Important for maintaining cell shape and cell wall integrity by localizing peptidoglycan synthesis to the cell poles. Protects PbpB (PBP3, FtsI) from oxidative stress-induced cleavage. This chain is Cell wall synthesis protein Wag31 (wag31), found in Mycolicibacterium smegmatis (strain ATCC 700084 / mc(2)155) (Mycobacterium smegmatis).